A 505-amino-acid polypeptide reads, in one-letter code: ATP synthase subunit alpha (505 aa).

Residue 169–176 (GDRKTGKT) coordinates ATP.

The protein belongs to the ATPase alpha/beta chains family. F-type ATPases have 2 components, CF(1) - the catalytic core - and CF(0) - the membrane proton channel. CF(1) has five subunits: alpha(3), beta(3), gamma(1), delta(1), epsilon(1). CF(0) has three main subunits: a(1), b(2) and c(9-12). The alpha and beta chains form an alternating ring which encloses part of the gamma chain. CF(1) is attached to CF(0) by a central stalk formed by the gamma and epsilon chains, while a peripheral stalk is formed by the delta and b chains.

It is found in the cell membrane. The enzyme catalyses ATP + H2O + 4 H(+)(in) = ADP + phosphate + 5 H(+)(out). Its function is as follows. Produces ATP from ADP in the presence of a proton gradient across the membrane. The alpha chain is a regulatory subunit. The protein is ATP synthase subunit alpha of Leuconostoc mesenteroides subsp. mesenteroides (strain ATCC 8293 / DSM 20343 / BCRC 11652 / CCM 1803 / JCM 6124 / NCDO 523 / NBRC 100496 / NCIMB 8023 / NCTC 12954 / NRRL B-1118 / 37Y).